The chain runs to 156 residues: Transcription elongation factor GreA 1 (156 aa).

The stretch at 43 to 74 (RSENAEYSSAKRDLGRLESRLRYLNKQLQYAQ) forms a coiled coil.

Belongs to the GreA/GreB family.

Its function is as follows. Necessary for efficient RNA polymerase transcription elongation past template-encoded arresting sites. The arresting sites in DNA have the property of trapping a certain fraction of elongating RNA polymerases that pass through, resulting in locked ternary complexes. Cleavage of the nascent transcript by cleavage factors such as GreA or GreB allows the resumption of elongation from the new 3'terminus. GreA releases sequences of 2 to 3 nucleotides. The protein is Transcription elongation factor GreA 1 of Lactiplantibacillus plantarum (strain ATCC BAA-793 / NCIMB 8826 / WCFS1) (Lactobacillus plantarum).